A 292-amino-acid polypeptide reads, in one-letter code: Galactinol synthase 2 (292 aa).

Residue Lys-65 is part of the active site. Residues Asp-81, Asp-83, and His-218 each coordinate Mn(2+).

Belongs to the glycosyltransferase 8 family. Galactosyltransferase subfamily. A divalent metal cation is required as a cofactor. In terms of tissue distribution, present in phloem-associated intermediary cells. Weakly expressed in leaves.

Its subcellular location is the cytoplasm. The enzyme catalyses myo-inositol + UDP-alpha-D-galactose = alpha-D-galactosyl-(1-&gt;3)-1D-myo-inositol + UDP + H(+). Its function is as follows. May promote plant stress tolerance. Galactinol synthase mainly involved in the biosynthesis of transport raffinose family oligosaccharides (RFOs) that function as osmoprotectants. The sequence is that of Galactinol synthase 2 (GOLS2) from Ajuga reptans (Bugle).